Consider the following 443-residue polypeptide: Probable glucomannan 4-beta-mannosyltransferase 11 (443 aa).

Asp-52 is a catalytic residue. Substrate is bound by residues Asp-111 and Asp-113. Residue Asp-205 is part of the active site. 4 consecutive transmembrane segments (helical) span residues 284–304 (IIVH…SVFF), 321–341 (ITLF…FWVL), 400–420 (EMMV…FGKT), and 421–441 (VLYI…IGFI).

This sequence belongs to the glycosyltransferase 2 family. Plant cellulose synthase-like A subfamily.

Its subcellular location is the golgi apparatus membrane. The enzyme catalyses GDP-mannose + (glucomannan)n = GDP + (glucomannan)n+1.. Probable mannan synthase which consists of a 4-beta-mannosyltransferase activity on mannan using GDP-mannose. The beta-1,4-mannan product is the backbone for galactomannan synthesis by galactomannan galactosyltransferase. Galactomannan is a noncellulosic polysaccharides of plant cell wall. The chain is Probable glucomannan 4-beta-mannosyltransferase 11 from Arabidopsis thaliana (Mouse-ear cress).